Consider the following 643-residue polypeptide: Fructose-1,6-bisphosphatase class 3 (643 aa).

The protein belongs to the FBPase class 3 family. Requires Mn(2+) as cofactor.

The enzyme catalyses beta-D-fructose 1,6-bisphosphate + H2O = beta-D-fructose 6-phosphate + phosphate. The protein operates within carbohydrate biosynthesis; gluconeogenesis. The protein is Fructose-1,6-bisphosphatase class 3 of Lacticaseibacillus casei (strain BL23) (Lactobacillus casei).